The primary structure comprises 509 residues: Dol-P-Glc:Glc(2)Man(9)GlcNAc(2)-PP-Dol alpha-1,2-glucosyltransferase (509 aa).

At 1–4 (MGKL) the chain is on the cytoplasmic side. The helical transmembrane segment at 5–25 (AVAAITSLWVIPMSIIVNHIV) threads the bilayer. At 26 to 57 (PEPYMDEIFHVPQAQQYCNGNFRSWDPMITTP) the chain is on the lumenal side. Residues 58–78 (PGLYYLSLAHVASLFPGMLLM) traverse the membrane as a helical segment. At 79–99 (ENTSQSFSEACSTSVLRSTNA) the chain is on the cytoplasmic side. A helical membrane pass occupies residues 100-120 (VSAVLCGVLVYEIIRFLGPNL). Over 121–124 (SDRK) the chain is Lumenal. The helical transmembrane segment at 125–145 (ATFMALVMSLYPLHWFFTFLY) threads the bilayer. Topologically, residues 146-170 (YTDVASLTAVLAMYLTCLKRRYVLS) are cytoplasmic. A helical membrane pass occupies residues 171-191 (ALFGTLAVFIRQTNVVWMLFV). Over 192–285 (ACSGILDFTL…KWRILIKFSP (94 aa)) the chain is Lumenal. Residues 210–254 (QEVNQELHQSSNKKGATLRSNLRKRKSDISSDTSDPFNHGQTVPS) form a disordered region. 2 stretches are compositionally biased toward polar residues: residues 215-229 (ELHQ…TLRS) and 239-254 (SSDT…TVPS). The chain crosses the membrane as a helical span at residues 286 to 306 (FIFVVVAFGIFILWNGGIVLG). Residues 307-311 (AKEAH) lie on the Cytoplasmic side of the membrane. The helical transmembrane segment at 312 to 332 (VVSLHFAQIMYFSLVSALFTA) threads the bilayer. Topologically, residues 333 to 355 (PLHFSVNQLRHQFHQLHRNWSLS) are lumenal. N-linked (GlcNAc...) asparagine glycosylation occurs at Asn-351. The chain crosses the membrane as a helical span at residues 356–376 (LILTLVALVAGFVSVHFFSLA). The Cytoplasmic portion of the chain corresponds to 377–400 (HPYLLADNRHYPFYLWRKIINAHW). Residues 401–421 (LMKYILVPVYVYSWFSILTLL) traverse the membrane as a helical segment. The Lumenal portion of the chain corresponds to 422–428 (AKTRRQT). A helical membrane pass occupies residues 429-449 (WILVYFLATCGVLVPTPLIEF). Residues 450-472 (RYYTIPFYLFMLHSCVRSSSFAT) lie on the Cytoplasmic side of the membrane. A helical transmembrane segment spans residues 473 to 493 (WLLIGTIFVSINVFTMAMFLF). At 494–509 (RPFKWSHEDGVQRFIW) the chain is on the lumenal side.

The protein belongs to the ALG10 glucosyltransferase family.

The protein localises to the endoplasmic reticulum membrane. The enzyme catalyses an alpha-D-Glc-(1-&gt;3)-alpha-D-Glc-(1-&gt;3)-alpha-D-Man-(1-&gt;2)-alpha-D-Man-(1-&gt;2)-alpha-D-Man-(1-&gt;3)-[alpha-D-Man-(1-&gt;2)-alpha-D-Man-(1-&gt;3)-[alpha-D-Man-(1-&gt;2)-alpha-D-Man-(1-&gt;6)]-alpha-D-Man-(1-&gt;6)]-beta-D-Man-(1-&gt;4)-beta-D-GlcNAc-(1-&gt;4)-alpha-D-GlcNAc-diphospho-di-trans,poly-cis-dolichol + a di-trans,poly-cis-dolichyl beta-D-glucosyl phosphate = a alpha-D-Glc-(1-&gt;2)-alpha-D-Glc-(1-&gt;3)-alpha-D-Glc-(1-&gt;3)-alpha-D-Man-(1-&gt;2)-alpha-D-Man-(1-&gt;2)-alpha-D-Man-(1-&gt;3)-[alpha-D-Man-(1-&gt;2)-alpha-D-Man-(1-&gt;3)-[alpha-D-Man-(1-&gt;2)-alpha-D-Man-(1-&gt;6)]-alpha-D-Man-(1-&gt;6)]-beta-D-Man-(1-&gt;4)-beta-D-GlcNAc-(1-&gt;4)-alpha-D-GlcNAc-diphospho-di-trans,poly-cis-dolichol + a di-trans,poly-cis-dolichyl phosphate + H(+). It functions in the pathway protein modification; protein glycosylation. In terms of biological role, dol-P-Glc:Glc(2)Man(9)GlcNAc(2)-PP-Dol alpha-1,2-glucosyltransferase that operates in the biosynthetic pathway of dolichol-linked oligosaccharides, the glycan precursors employed in protein asparagine (N)-glycosylation. The assembly of dolichol-linked oligosaccharides begins on the cytosolic side of the endoplasmic reticulum membrane and finishes in its lumen. The sequential addition of sugars to dolichol pyrophosphate produces dolichol-linked oligosaccharides containing fourteen sugars, including two GlcNAcs, nine mannoses and three glucoses. Once assembled, the oligosaccharide is transferred from the lipid to nascent proteins by oligosaccharyltransferases. In the lumen of the endoplasmic reticulum, adds the third and last glucose residue from dolichyl phosphate glucose (Dol-P-Glc) onto the lipid-linked oligosaccharide intermediate Glc(2)Man(9)GlcNAc(2)-PP-Dol to produce Glc(3)Man(9)GlcNAc(2)-PP-Dol. In Arabidopsis thaliana (Mouse-ear cress), this protein is Dol-P-Glc:Glc(2)Man(9)GlcNAc(2)-PP-Dol alpha-1,2-glucosyltransferase.